The following is a 443-amino-acid chain: Serine/threonine-protein kinase SSN3 (443 aa).

The tract at residues 1–24 (MERKRGREMNPPSADPPSATPVAR) is disordered. Positions 54-384 (YKIVGFISSG…AEKALEHRYF (331 aa)) constitute a Protein kinase domain. ATP is bound by residues 60–68 (ISSGTYGRV) and K84. Catalysis depends on D185, which acts as the Proton acceptor. A disordered region spans residues 405-443 (RRVSQEDNDIRTSSLPGTKRSGLPDDSLMGRPAKRLKEG).

This sequence belongs to the protein kinase superfamily. CMGC Ser/Thr protein kinase family. CDC2/CDKX subfamily. In terms of assembly, component of the srb8-11 complex, a regulatory module of the Mediator complex. The cofactor is Mg(2+).

Its subcellular location is the nucleus. The enzyme catalyses L-seryl-[protein] + ATP = O-phospho-L-seryl-[protein] + ADP + H(+). It catalyses the reaction L-threonyl-[protein] + ATP = O-phospho-L-threonyl-[protein] + ADP + H(+). The catalysed reaction is [DNA-directed RNA polymerase] + ATP = phospho-[DNA-directed RNA polymerase] + ADP + H(+). Component of the srb8-11 complex. The srb8-11 complex is a regulatory module of the Mediator complex which is itself dependent transcription. The srb8-11 complex may be involved in the transcriptional repression of a subset of genes regulated by Mediator. It may inhibit the association of the Mediator complex with RNA polymerase II to form the holoenzyme complex. The srb8-11 complex phosphorylates the C-terminal domain (CTD) of the largest subunit of RNA polymerase II. In Phaeosphaeria nodorum (strain SN15 / ATCC MYA-4574 / FGSC 10173) (Glume blotch fungus), this protein is Serine/threonine-protein kinase SSN3 (SSN3).